Reading from the N-terminus, the 394-residue chain is Enoyl-CoA delta isomerase 2 (394 aa).

The transit peptide at 1 to 38 directs the protein to the mitochondrion; that stretch reads MAMAYLAWRLARRSCPSSLQVTSFPVVQLHMNRTAMRA. In terms of domain architecture, ACB spans 39–124; the sequence is SQKDFENSMN…VSSLSPSLES (86 aa). Residue K51 is modified to N6-acetyllysine; alternate. K51 carries the post-translational modification N6-succinyllysine; alternate. Residue K55 is modified to N6-succinyllysine. The residue at position 62 (K62) is an N6-acetyllysine; alternate. Position 62 is an N6-succinyllysine; alternate (K62). 66-70 is an an acyl-CoA binding site; the sequence is YALYK. N6-succinyllysine is present on residues K70, K81, and K90. Residue K92 is modified to N6-acetyllysine; alternate. An N6-succinyllysine; alternate modification is found at K92. K92 lines the an acyl-CoA pocket. Residue S101 is modified to Phosphoserine. Y111 contributes to the an acyl-CoA binding site. S119 carries the post-translational modification Phosphoserine. Residues 151–322 form an ECH-like region; that stretch reads TKIMFNRPKK…AQGLVTEVFP (172 aa). An N6-succinyllysine modification is found at K161. 198 to 202 is a substrate binding site; it reads SGNDL. K289 carries the N6-succinyllysine modification. A Microbody targeting signal motif is present at residues 392–394; it reads SKL.

This sequence in the C-terminal section; belongs to the enoyl-CoA hydratase/isomerase family. As to expression, abundant in heart, skeletal muscle and liver. Expressed in CD34(+) T-cells and CD34(+) bone marrow cells.

It localises to the mitochondrion. The protein localises to the peroxisome matrix. The catalysed reaction is a (3Z)-enoyl-CoA = a 4-saturated (2E)-enoyl-CoA. It carries out the reaction (3Z)-octenoyl-CoA = (2E)-octenoyl-CoA. The enzyme catalyses a (3E)-enoyl-CoA = a 4-saturated (2E)-enoyl-CoA. It catalyses the reaction (2E)-tetradecenoyl-CoA = (3Z)-tetradecenoyl-CoA. The catalysed reaction is (3E)-tetradecenoyl-CoA = (2E)-tetradecenoyl-CoA. It carries out the reaction (3E)-octenoyl-CoA = (2E)-octenoyl-CoA. The enzyme catalyses (3E)-nonenoyl-CoA = (2E)-nonenoyl-CoA. Its pathway is lipid metabolism; fatty acid beta-oxidation. In terms of biological role, able to isomerize both 3-cis and 3-trans double bonds into the 2-trans form in a range of enoyl-CoA species. Has a preference for 3-trans substrates. This is Enoyl-CoA delta isomerase 2 (ECI2) from Homo sapiens (Human).